A 348-amino-acid polypeptide reads, in one-letter code: Putative methylthioribose-1-phosphate isomerase (348 aa).

Substrate-binding positions include 55–57 (RGA), R98, and Q203. The active-site Proton donor is the D244. 253–254 (NK) lines the substrate pocket.

Belongs to the eIF-2B alpha/beta/delta subunits family. MtnA subfamily.

It carries out the reaction 5-(methylsulfanyl)-alpha-D-ribose 1-phosphate = 5-(methylsulfanyl)-D-ribulose 1-phosphate. In terms of biological role, catalyzes the interconversion of methylthioribose-1-phosphate (MTR-1-P) into methylthioribulose-1-phosphate (MTRu-1-P). This is Putative methylthioribose-1-phosphate isomerase from Methanosarcina acetivorans (strain ATCC 35395 / DSM 2834 / JCM 12185 / C2A).